We begin with the raw amino-acid sequence, 176 residues long: Cystatin-related protein 1 (176 aa).

Positions 1 to 26 are cleaved as a signal peptide; it reads MCKTLHGTLLLLAIFVLFLNFSHATA. Residues 27–31 constitute a propeptide that is removed on maturation; sequence KRTRR. The N-linked (GlcNAc...) asparagine glycan is linked to Asn-71. 2 cysteine pairs are disulfide-bonded: Cys-129/Cys-139 and Cys-153/Cys-173.

The protein belongs to the cystatin family. As to expression, prostate and lacrimal gland.

The chain is Cystatin-related protein 1 (Andpro) from Rattus norvegicus (Rat).